Reading from the N-terminus, the 306-residue chain is Bifunctional protein FolD 1 (306 aa).

NADP(+) contacts are provided by residues Gly-170–Gly-172, Thr-199, and Val-240. A disordered region spans residues Ala-285 to Arg-306.

It belongs to the tetrahydrofolate dehydrogenase/cyclohydrolase family. In terms of assembly, homodimer.

It catalyses the reaction (6R)-5,10-methylene-5,6,7,8-tetrahydrofolate + NADP(+) = (6R)-5,10-methenyltetrahydrofolate + NADPH. The enzyme catalyses (6R)-5,10-methenyltetrahydrofolate + H2O = (6R)-10-formyltetrahydrofolate + H(+). It functions in the pathway one-carbon metabolism; tetrahydrofolate interconversion. Its function is as follows. Catalyzes the oxidation of 5,10-methylenetetrahydrofolate to 5,10-methenyltetrahydrofolate and then the hydrolysis of 5,10-methenyltetrahydrofolate to 10-formyltetrahydrofolate. The polypeptide is Bifunctional protein FolD 1 (Salinispora tropica (strain ATCC BAA-916 / DSM 44818 / JCM 13857 / NBRC 105044 / CNB-440)).